A 201-amino-acid chain; its full sequence is Keratin-associated protein 4-12 (201 aa).

Tandem repeats lie at residues 5-9 (CCGSV), 20-24 (CCRPS), 25-29 (CCQTT), 30-34 (CCRTT), 35-39 (CCRPS), 40-44 (CCVSS), 45-49 (CCRPQ), 50-54 (CCQSV), 55-59 (CCQPT), 60-64 (CCRPS), 65-69 (CCQTT), 70-74 (CCRTT), 75-79 (CCRPS), 80-84 (CCVSS), 85-89 (CCRPQ), 90-94 (CCQSV), 95-99 (CCQPT), 100-104 (CCRPS), 105-109 (CCQTT), 110-114 (CCRTT), 115-119 (CCRPS), 120-124 (CCVSS), 125-129 (CCRPQ), 130-134 (CCQSV), 135-139 (CCQPT), 140-144 (CCRPS), 145-149 (CCISS), 155-159 (CCESS), 160-164 (CCRPC), and 165-169 (CCLRP). Residues 5 to 169 (CCGSVCSDQG…CCRPCCCLRP (165 aa)) form a 31 X 5 AA repeats of C-C-[GRQVIL]-[SPTR]-[VSTQPC] region.

This sequence belongs to the KRTAP type 4 family. As to quaternary structure, interacts with hair keratins. As to expression, expressed in the hair follicles.

Its function is as follows. In the hair cortex, hair keratin intermediate filaments are embedded in an interfilamentous matrix, consisting of hair keratin-associated proteins (KRTAP), which are essential for the formation of a rigid and resistant hair shaft through their extensive disulfide bond cross-linking with abundant cysteine residues of hair keratins. The matrix proteins include the high-sulfur and high-glycine-tyrosine keratins. This is Keratin-associated protein 4-12 (KRTAP4-12) from Homo sapiens (Human).